We begin with the raw amino-acid sequence, 1819 residues long: Gamma-tubulin complex component 6 (1819 aa).

Disordered stretches follow at residues 810-889 (SEAH…GARP), 929-951 (LPPSAPGEAPAAASTQPSRPQEY), and 1000-1023 (RETLLPSHPPRRAALEEGSSQPTE). A run of 9 repeats spans residues 1027–1053 (GQVSGGGLPTGDYASEIAPTRPRWNTH), 1054–1080 (GHVSDASIRVGENVSDVAPTQPRWNTH), 1081–1107 (GHVSNASISLGESVSDVAPTRPRWNIH), 1108–1134 (GHVSNASIRVGENVSDVAPTRPRWNTH), 1135–1161 (GHVSNASIRVGENVSDVAPTRPRWNTH), 1162–1188 (GHVSDASISLGESVSDMAPARPRWNTH), 1189–1215 (GHVSDASISLGESVSDMAPTRPRWNTH), 1216–1242 (GHVSDTSIRVGENVSDVAPIRSRCNTH), and 1243–1269 (GHVSDASISLGEPVSDVVSTRPRWNTH). Positions 1027-1269 (GQVSGGGLPT…VSTRPRWNTH (243 aa)) are 9 X 27 AA tandem repeats. A disordered region spans residues 1271-1412 (PIPPPHMVLG…EAEASAAEAQ (142 aa)). The span at 1297–1314 (PPGHTSQSALSLGAQSTV) shows a compositional bias: polar residues. The span at 1321-1335 (LPVEVGPSLSSPSSG) shows a compositional bias: low complexity. The segment covering 1384–1398 (WPLNSQEDTAAQSSP) has biased composition (polar residues).

The protein belongs to the TUBGCP family. As to quaternary structure, component of the gamma-tubulin ring complex (gTuRC) consisting of TUBGCP2, TUBGCP3, TUBGCP4, TUBGCP5 and TUBGCP6 and gamma-tubulin TUBG1 or TUBG2. TUBGCP2, TUBGCP3, TUBGCP4, TUBGCP5 and TUBGCP6 assemble in a 5:5:2:1:1 stoichiometry; each is associated with a gamma-tubulin, thereby arranging 14 gamma-tubulins in a helical manner. Gamma-tubulin at the first position is blocked by TUBGCP3 at the last position, allowing 13 protafilaments to grow into a microtubule. The gTuRC (via TUBGCP3 and TUBGCP6) interacts with ACTB and MZT1; the interactions form a luminal bridge that stabilizes the initial structure during complex assembly. The gTuRC (via TUBGCP2) interacts with MZT2A/MZT2B and CDK5RAP2 (via CM1 motif); the interactions play a role in gTuRC activation.

It localises to the cytoplasm. The protein localises to the cytoskeleton. It is found in the microtubule organizing center. Its subcellular location is the centrosome. Functionally, component of the gamma-tubulin ring complex (gTuRC) which mediates microtubule nucleation. The gTuRC regulates the minus-end nucleation of alpha-beta tubulin heterodimers that grow into microtubule protafilaments, a critical step in centrosome duplication and spindle formation. The chain is Gamma-tubulin complex component 6 (TUBGCP6) from Homo sapiens (Human).